Consider the following 103-residue polypeptide: Alkanal monooxygenase alpha chain (103 aa).

In terms of assembly, heterodimer of an alpha and a beta chain.

It carries out the reaction a long-chain fatty aldehyde + FMNH2 + O2 = a long-chain fatty acid + hnu + FMN + H2O + 2 H(+). Functionally, light-emitting reaction in luminous bacteria. In Vibrio cholerae, this protein is Alkanal monooxygenase alpha chain (luxA).